The following is a 487-amino-acid chain: ATP synthase subunit beta, plastid (487 aa).

169 to 176 (GGAGVGKT) contributes to the ATP binding site.

Belongs to the ATPase alpha/beta chains family. As to quaternary structure, F-type ATPases have 2 components, CF(1) - the catalytic core - and CF(0) - the membrane proton channel. CF(1) has five subunits: alpha(3), beta(3), gamma(1), delta(1), epsilon(1). CF(0) has four main subunits: a(1), b(1), b'(1) and c(9-12).

The protein localises to the plastid membrane. It catalyses the reaction ATP + H2O + 4 H(+)(in) = ADP + phosphate + 5 H(+)(out). Its function is as follows. Produces ATP from ADP in the presence of a proton gradient across the membrane. The catalytic sites are hosted primarily by the beta subunits. The chain is ATP synthase subunit beta, plastid (atpB) from Cuscuta pentagona (Five-angled dodder).